Reading from the N-terminus, the 183-residue chain is Caspase recruitment domain-containing protein 19 (183 aa).

An intrachain disulfide couples Cys7 to Cys77. A CARD domain is found at 8–99 (DRLVQDTPFL…PLHSCLPSRH (92 aa)). Residues 122–142 (GPVAFLTCLGLAAGLALLIYC) traverse the membrane as a helical segment.

In terms of assembly, associates with BCL10 by CARD-CARD interaction.

It localises to the endoplasmic reticulum membrane. The protein localises to the mitochondrion membrane. Plays a role in inhibiting the effects of BCL10-induced activation of NF-kappa-B. May inhibit the phosphorylation of BCL10 in a CARD-dependent manner. The chain is Caspase recruitment domain-containing protein 19 (CARD19) from Bos taurus (Bovine).